The primary structure comprises 451 residues: Uronate isomerase (451 aa).

This sequence belongs to the metallo-dependent hydrolases superfamily. Uronate isomerase family.

The enzyme catalyses D-glucuronate = D-fructuronate. It carries out the reaction aldehydo-D-galacturonate = keto-D-tagaturonate. It functions in the pathway carbohydrate metabolism; pentose and glucuronate interconversion. The chain is Uronate isomerase from Thermotoga neapolitana (strain ATCC 49049 / DSM 4359 / NBRC 107923 / NS-E).